Consider the following 124-residue polypeptide: Phosphoribosyl-ATP pyrophosphatase (124 aa).

Belongs to the PRA-PH family.

The protein resides in the cytoplasm. The catalysed reaction is 1-(5-phospho-beta-D-ribosyl)-ATP + H2O = 1-(5-phospho-beta-D-ribosyl)-5'-AMP + diphosphate + H(+). It functions in the pathway amino-acid biosynthesis; L-histidine biosynthesis; L-histidine from 5-phospho-alpha-D-ribose 1-diphosphate: step 2/9. This Ralstonia pickettii (strain 12J) protein is Phosphoribosyl-ATP pyrophosphatase.